The chain runs to 291 residues: 4-diphosphocytidyl-2-C-methyl-D-erythritol kinase (291 aa).

The active site involves Lys-10. An ATP-binding site is contributed by 94–104; it reads PVSAGLAGGSS. Residue Asp-136 is part of the active site.

It belongs to the GHMP kinase family. IspE subfamily.

It catalyses the reaction 4-CDP-2-C-methyl-D-erythritol + ATP = 4-CDP-2-C-methyl-D-erythritol 2-phosphate + ADP + H(+). It functions in the pathway isoprenoid biosynthesis; isopentenyl diphosphate biosynthesis via DXP pathway; isopentenyl diphosphate from 1-deoxy-D-xylulose 5-phosphate: step 3/6. Functionally, catalyzes the phosphorylation of the position 2 hydroxy group of 4-diphosphocytidyl-2C-methyl-D-erythritol. The sequence is that of 4-diphosphocytidyl-2-C-methyl-D-erythritol kinase from Listeria welshimeri serovar 6b (strain ATCC 35897 / DSM 20650 / CCUG 15529 / CIP 8149 / NCTC 11857 / SLCC 5334 / V8).